Consider the following 372-residue polypeptide: Queuine tRNA-ribosyltransferase (372 aa).

Asp92 (proton acceptor) is an active-site residue. Substrate-binding positions include 92-96 (DSGGF), Asp146, Gln188, and Gly215. The interval 246–252 (GIGTLRE) is RNA binding. The Nucleophile role is filled by Asp265. Residues 270–274 (TRLGR) are RNA binding; important for wobble base 34 recognition. Zn(2+) contacts are provided by Cys303, Cys305, Cys308, and His334.

This sequence belongs to the queuine tRNA-ribosyltransferase family. As to quaternary structure, homodimer. Within each dimer, one monomer is responsible for RNA recognition and catalysis, while the other monomer binds to the replacement base PreQ1. Zn(2+) serves as cofactor.

It catalyses the reaction 7-aminomethyl-7-carbaguanine + guanosine(34) in tRNA = 7-aminomethyl-7-carbaguanosine(34) in tRNA + guanine. Its pathway is tRNA modification; tRNA-queuosine biosynthesis. Functionally, catalyzes the base-exchange of a guanine (G) residue with the queuine precursor 7-aminomethyl-7-deazaguanine (PreQ1) at position 34 (anticodon wobble position) in tRNAs with GU(N) anticodons (tRNA-Asp, -Asn, -His and -Tyr). Catalysis occurs through a double-displacement mechanism. The nucleophile active site attacks the C1' of nucleotide 34 to detach the guanine base from the RNA, forming a covalent enzyme-RNA intermediate. The proton acceptor active site deprotonates the incoming PreQ1, allowing a nucleophilic attack on the C1' of the ribose to form the product. After dissociation, two additional enzymatic reactions on the tRNA convert PreQ1 to queuine (Q), resulting in the hypermodified nucleoside queuosine (7-(((4,5-cis-dihydroxy-2-cyclopenten-1-yl)amino)methyl)-7-deazaguanosine). The sequence is that of Queuine tRNA-ribosyltransferase from Prochlorococcus marinus (strain MIT 9313).